The sequence spans 351 residues: DNA polymerase IV (351 aa).

The UmuC domain occupies 4–185 (IIHVDMDCFF…LPLGKIPGVG (182 aa)). Residues aspartate 8 and aspartate 103 each coordinate Mg(2+). Residue glutamate 104 is part of the active site.

The protein belongs to the DNA polymerase type-Y family. Monomer. Requires Mg(2+) as cofactor.

Its subcellular location is the cytoplasm. The enzyme catalyses DNA(n) + a 2'-deoxyribonucleoside 5'-triphosphate = DNA(n+1) + diphosphate. In terms of biological role, poorly processive, error-prone DNA polymerase involved in untargeted mutagenesis. Copies undamaged DNA at stalled replication forks, which arise in vivo from mismatched or misaligned primer ends. These misaligned primers can be extended by PolIV. Exhibits no 3'-5' exonuclease (proofreading) activity. May be involved in translesional synthesis, in conjunction with the beta clamp from PolIII. This Cronobacter sakazakii (strain ATCC BAA-894) (Enterobacter sakazakii) protein is DNA polymerase IV.